The primary structure comprises 1113 residues: uncharacterized protein (1113 aa).

ATP is bound at residue 313–320; that stretch reads GPPGTGKS.

This sequence belongs to the DNA2/NAM7 helicase family.

This is an uncharacterized protein from Mycoplasma pneumoniae (strain ATCC 29342 / M129 / Subtype 1) (Mycoplasmoides pneumoniae).